A 288-amino-acid chain; its full sequence is Probable branched-chain-amino-acid aminotransferase (288 aa).

Lys153 bears the N6-(pyridoxal phosphate)lysine mark.

It belongs to the class-IV pyridoxal-phosphate-dependent aminotransferase family. Pyridoxal 5'-phosphate is required as a cofactor.

It carries out the reaction L-leucine + 2-oxoglutarate = 4-methyl-2-oxopentanoate + L-glutamate. The enzyme catalyses L-isoleucine + 2-oxoglutarate = (S)-3-methyl-2-oxopentanoate + L-glutamate. The catalysed reaction is L-valine + 2-oxoglutarate = 3-methyl-2-oxobutanoate + L-glutamate. It functions in the pathway amino-acid biosynthesis; L-isoleucine biosynthesis; L-isoleucine from 2-oxobutanoate: step 4/4. The protein operates within amino-acid biosynthesis; L-leucine biosynthesis; L-leucine from 3-methyl-2-oxobutanoate: step 4/4. Its pathway is amino-acid biosynthesis; L-valine biosynthesis; L-valine from pyruvate: step 4/4. Its function is as follows. Acts on leucine, isoleucine and valine. In Rickettsia typhi (strain ATCC VR-144 / Wilmington), this protein is Probable branched-chain-amino-acid aminotransferase (ilvE).